Here is a 507-residue protein sequence, read N- to C-terminus: ATP synthase subunit alpha, chloroplastic (507 aa).

ATP is bound at residue 170-177 (GDRQTGKT).

It belongs to the ATPase alpha/beta chains family. In terms of assembly, F-type ATPases have 2 components, CF(1) - the catalytic core - and CF(0) - the membrane proton channel. CF(1) has five subunits: alpha(3), beta(3), gamma(1), delta(1), epsilon(1). CF(0) has four main subunits: a, b, b' and c.

Its subcellular location is the plastid. The protein localises to the chloroplast thylakoid membrane. It carries out the reaction ATP + H2O + 4 H(+)(in) = ADP + phosphate + 5 H(+)(out). In terms of biological role, produces ATP from ADP in the presence of a proton gradient across the membrane. The alpha chain is a regulatory subunit. This chain is ATP synthase subunit alpha, chloroplastic, found in Buxus microphylla (Littleleaf boxwood).